A 29-amino-acid polypeptide reads, in one-letter code: U1-pseudomyrmecitoxin-Pt1 subunit SS2 (29 aa).

It belongs to the myrmexin family. Heterodimer composed of subunit SS2 and subunit LS1 (U1-PSDTX-Pt1e), and heterodimer composed of subunit SS2 and LS2 (U1-PSDTX-Pt1c); disulfide-linked. Expressed by the venom gland.

Its subcellular location is the secreted. In terms of biological role, this heterodimer may have anti-inflammatory properties, since the myrmexin complex (composed of 6 SS-LS heterodimers) inhibits carrageenin-induced edema in a dose-dependent manner (after subcutaneous injection into rats). The sequence is that of U1-pseudomyrmecitoxin-Pt1 subunit SS2 from Pseudomyrmex triplarinus (Ant).